Here is a 338-residue protein sequence, read N- to C-terminus: Malate dehydrogenase, mitochondrial (338 aa).

The transit peptide at 1–24 directs the protein to the mitochondrion; the sequence is MLSALARPAGAALRRSFSTSAQNN. Residues 31 to 37 and aspartate 57 contribute to the NAD(+) site; that span reads GASGGIG. A glycan (O-linked (GlcNAc) serine) is linked at serine 33. 2 positions are modified to N6-acetyllysine; alternate: lysine 78 and lysine 91. An N6-succinyllysine; alternate mark is found at lysine 78 and lysine 91. The substrate site is built by arginine 104 and arginine 110. NAD(+) is bound by residues asparagine 117 and 140-142; that span reads ISN. Asparagine 142 is a binding site for substrate. Lysine 165 is modified (N6-acetyllysine). Position 176 (arginine 176) interacts with substrate. The residue at position 185 (lysine 185) is an N6-acetyllysine; alternate. Lysine 185 is subject to N6-succinyllysine; alternate. The Proton acceptor role is filled by histidine 200. N6-succinyllysine is present on lysine 203. 2 positions are modified to N6-acetyllysine; alternate: lysine 215 and lysine 239. An N6-succinyllysine; alternate mark is found at lysine 215 and lysine 239. Lysine 239 is modified (N6-malonyllysine; alternate). Serine 246 carries the post-translational modification Phosphoserine. Methionine 251 contributes to the NAD(+) binding site. Residue lysine 269 is modified to N6-succinyllysine. N6-acetyllysine; alternate is present on residues lysine 296, lysine 301, lysine 307, lysine 314, and lysine 324. An N6-succinyllysine; alternate mark is found at lysine 296, lysine 301, lysine 307, lysine 314, and lysine 324. Lysine 307 bears the N6-malonyllysine; alternate mark. Serine 326 is subject to Phosphoserine. Lysine 328, lysine 329, and lysine 335 each carry N6-acetyllysine; alternate. Lysine 328 bears the N6-succinyllysine; alternate mark. N6-malonyllysine; alternate is present on lysine 329. The residue at position 335 (lysine 335) is an N6-succinyllysine; alternate.

It belongs to the LDH/MDH superfamily. MDH type 1 family. In terms of assembly, homodimer. In terms of processing, acetylation is enhanced after treatment either with trichostin A (TCA) or with nicotinamide (NAM) with the appearance of tri- and tetraacetylations. Glucose also increases acetylation.

It is found in the mitochondrion matrix. It carries out the reaction (S)-malate + NAD(+) = oxaloacetate + NADH + H(+). Enzyme activity is enhanced by acetylation. The protein is Malate dehydrogenase, mitochondrial (MDH2) of Bos taurus (Bovine).